The following is a 669-amino-acid chain: MARLVAVVKYSDEDYPFEKRQMPLYIDDSLTMVLEFSDNMLNLDKQQIDTVQLEQFIQRHRMLKEQDLASAMTVTSREVFNALSQLLPCVGCRRCVERLFSQVMQTGIQALDPLSVGANGVLTLSHGFMTDATKLYTLFYMCGSKMNNELDAIAKNKKGKKNNRCKFHSLDVRKPKPVGGHWMDVWEVMSPECRDEVALIDSNCLLETLENYLQKHRFCADCKNKVHRAFNILTGELDFSKVKGYCANVYQGLRCCPHEGHIHLCCETDFIAHVLGRAEPEFAGGYERRERHAKTIDVAQEEVLTCLGIHLYERLHRIWLKLRAEVQTRQMLFYLGVDALRKSFEVTVEKVRGISRMDQYFKDILEEEKVQELKQEKKRQKKNRKKNKSSCDLPTPLETKSANPSQKNEPPGFMESDGNPCNISEDSNMCAEVTVKNEDLLRSHKVKKGLTPHSNVSDCGYSSSLEGSEPGSQEGSDVACAEGICKHDEAGDDKEEEEGDSCVECWNNCTKDNIKGKNKKKKKKCKPFKCENENTLKQVPYNTESSDSVHSNPNEETKVYNFCMDSEFPRRPWIYHRNEFFSDMSSTESQTRFYSGRETKSLKELLDESECSSQEEDEITQDDIQAFKETYQTFYRDRQQFRQCLKENFKQFCLHQNPSLLVGNTGAIN.

Disordered regions lie at residues 375–421 (QEKK…GNPC) and 452–475 (PHSN…SQEG). Residues 376–388 (EKKRQKKNRKKNK) show a composition bias toward basic residues. The span at 398–408 (ETKSANPSQKN) shows a compositional bias: polar residues.

Its subcellular location is the cytoplasm. Functionally, may be involved in spermatogenesis. The chain is Gametogenetin-binding protein 2 (ggnbp2) from Xenopus tropicalis (Western clawed frog).